We begin with the raw amino-acid sequence, 439 residues long: NAD-dependent malic enzyme 1 (439 aa).

In terms of domain architecture, ACT spans 9–84; sequence TLMIETPSVP…GIRLHTVSDE (76 aa). Residue tyrosine 112 is the Proton donor of the active site. The active-site Proton acceptor is the lysine 167. A divalent metal cation contacts are provided by glutamate 209, aspartate 210, and aspartate 235. Residues 268-271, asparagine 347, and asparagine 373 contribute to the NAD(+) site; that span reads LGAA.

This sequence belongs to the malic enzymes family. Mg(2+) is required as a cofactor. Mn(2+) serves as cofactor.

The enzyme catalyses (S)-malate + NAD(+) = pyruvate + CO2 + NADH. It catalyses the reaction oxaloacetate + H(+) = pyruvate + CO2. In terms of biological role, catalyzes the decarboxylation of malate to pyruvate. Is specific for NAD, cannot use NADP. Can also catalyze the decarboxylation of oxaloacetate. Involved in keeping the ATP levels high. The polypeptide is NAD-dependent malic enzyme 1 (Bacillus subtilis (strain 168)).